An 89-amino-acid chain; its full sequence is Co-chaperonin GroES (89 aa).

The protein belongs to the GroES chaperonin family. Heptamer of 7 subunits arranged in a ring. Interacts with the chaperonin GroEL.

It localises to the cytoplasm. Together with the chaperonin GroEL, plays an essential role in assisting protein folding. The GroEL-GroES system forms a nano-cage that allows encapsulation of the non-native substrate proteins and provides a physical environment optimized to promote and accelerate protein folding. GroES binds to the apical surface of the GroEL ring, thereby capping the opening of the GroEL channel. The sequence is that of Co-chaperonin GroES from Fervidobacterium nodosum (strain ATCC 35602 / DSM 5306 / Rt17-B1).